Reading from the N-terminus, the 395-residue chain is Protochlorophyllide reductase B, chloroplastic (395 aa).

The transit peptide at 1 to 59 (MALQAATSFLPSALSARKEGAAKDSAFFGVRLADGLKLDATSLGLRTKRVNTSSVAIRA) directs the protein to the chloroplast.

This sequence belongs to the short-chain dehydrogenases/reductases (SDR) family. POR subfamily.

The protein localises to the plastid. Its subcellular location is the chloroplast. The enzyme catalyses chlorophyllide a + NADP(+) = protochlorophyllide a + NADPH + H(+). It functions in the pathway porphyrin-containing compound metabolism; chlorophyll biosynthesis. In terms of biological role, phototransformation of protochlorophyllide (Pchlide) to chlorophyllide (Chlide). This Hordeum vulgare (Barley) protein is Protochlorophyllide reductase B, chloroplastic (PORB).